We begin with the raw amino-acid sequence, 201 residues long: Alpha-1-acid glycoprotein 2 (201 aa).

The first 18 residues, 1–18 (MALSWVLTVLSLLPLLEA), serve as a signal peptide directing secretion. Position 19 is a pyrrolidone carboxylic acid (Gln-19). Intrachain disulfides connect Cys-23–Cys-165 and Cys-90–Cys-183. An N-linked (GlcNAc...) (complex) asparagine glycan is attached at Asn-33. N-linked (GlcNAc...) asparagine glycosylation is found at Asn-56, Asn-72, Asn-93, and Asn-103.

It belongs to the calycin superfamily. Lipocalin family. Post-translationally, N-glycosylated. N-glycan heterogeneity at Asn-33: Hex5HexNAc4 (minor), Hex6HexNAc5 (major) and dHex1Hex6HexNAc5 (minor). Expressed by the liver and secreted in plasma.

The protein localises to the secreted. Functions as a transport protein in the blood stream. Binds various hydrophobic ligands in the interior of its beta-barrel domain. Also binds synthetic drugs and influences their distribution and availability. Appears to function in modulating the activity of the immune system during the acute-phase reaction. In Homo sapiens (Human), this protein is Alpha-1-acid glycoprotein 2 (ORM2).